The following is a 391-amino-acid chain: GTPase Obg (391 aa).

The 159-residue stretch at 1–159 (MKFIDEALIR…RDLLLELMLL (159 aa)) folds into the Obg domain. The OBG-type G domain occupies 160-333 (ADVGMLGLPN…LTRDIMDFIE (174 aa)). GTP contacts are provided by residues 166–173 (GLPNAGKS), 191–195 (FTTLV), 213–216 (DIPG), 283–286 (NKID), and 314–316 (SAA). Mg(2+) contacts are provided by serine 173 and threonine 193.

The protein belongs to the TRAFAC class OBG-HflX-like GTPase superfamily. OBG GTPase family. In terms of assembly, monomer. It depends on Mg(2+) as a cofactor.

Its subcellular location is the cytoplasm. Its function is as follows. An essential GTPase which binds GTP, GDP and possibly (p)ppGpp with moderate affinity, with high nucleotide exchange rates and a fairly low GTP hydrolysis rate. Plays a role in control of the cell cycle, stress response, ribosome biogenesis and in those bacteria that undergo differentiation, in morphogenesis control. The sequence is that of GTPase Obg from Actinobacillus pleuropneumoniae serotype 7 (strain AP76).